The chain runs to 104 residues: Pyrimidine/purine nucleoside phosphorylase (104 aa).

This sequence belongs to the nucleoside phosphorylase PpnP family.

It carries out the reaction a purine D-ribonucleoside + phosphate = a purine nucleobase + alpha-D-ribose 1-phosphate. The enzyme catalyses adenosine + phosphate = alpha-D-ribose 1-phosphate + adenine. It catalyses the reaction cytidine + phosphate = cytosine + alpha-D-ribose 1-phosphate. The catalysed reaction is guanosine + phosphate = alpha-D-ribose 1-phosphate + guanine. It carries out the reaction inosine + phosphate = alpha-D-ribose 1-phosphate + hypoxanthine. The enzyme catalyses thymidine + phosphate = 2-deoxy-alpha-D-ribose 1-phosphate + thymine. It catalyses the reaction uridine + phosphate = alpha-D-ribose 1-phosphate + uracil. The catalysed reaction is xanthosine + phosphate = alpha-D-ribose 1-phosphate + xanthine. In terms of biological role, catalyzes the phosphorolysis of diverse nucleosides, yielding D-ribose 1-phosphate and the respective free bases. Can use uridine, adenosine, guanosine, cytidine, thymidine, inosine and xanthosine as substrates. Also catalyzes the reverse reactions. The protein is Pyrimidine/purine nucleoside phosphorylase of Colwellia psychrerythraea (strain 34H / ATCC BAA-681) (Vibrio psychroerythus).